The sequence spans 483 residues: Cobyric acid synthase (483 aa).

In terms of domain architecture, GATase cobBQ-type spans 251 to 438 (ALIVAVPMLP…LHGVFSADRF (188 aa)). C333 serves as the catalytic Nucleophile. The active site involves H430.

This sequence belongs to the CobB/CobQ family. CobQ subfamily.

Its pathway is cofactor biosynthesis; adenosylcobalamin biosynthesis. Catalyzes amidations at positions B, D, E, and G on adenosylcobyrinic A,C-diamide. NH(2) groups are provided by glutamine, and one molecule of ATP is hydrogenolyzed for each amidation. The sequence is that of Cobyric acid synthase from Brucella melitensis biotype 2 (strain ATCC 23457).